The sequence spans 634 residues: UPF0329 protein ECU11_2090 (634 aa).

2 stretches are compositionally biased toward basic and acidic residues: residues 354 to 365 and 397 to 407; these read REEREKREESKG and GESKEEDRGEE. The segment at 354–438 is disordered; that stretch reads REEREKREES…KGSGEKRISE (85 aa). The segment covering 408–417 has biased composition (acidic residues); sequence GGVEAEDPLE.

This sequence belongs to the UPF0329 family.

In Encephalitozoon cuniculi (strain GB-M1) (Microsporidian parasite), this protein is UPF0329 protein ECU11_2090.